We begin with the raw amino-acid sequence, 157 residues long: NAD(P)H-quinone oxidoreductase subunit N (157 aa).

This sequence belongs to the complex I NdhN subunit family. NDH-1 can be composed of about 15 different subunits; different subcomplexes with different compositions have been identified which probably have different functions.

It localises to the cellular thylakoid membrane. The enzyme catalyses a plastoquinone + NADH + (n+1) H(+)(in) = a plastoquinol + NAD(+) + n H(+)(out). It catalyses the reaction a plastoquinone + NADPH + (n+1) H(+)(in) = a plastoquinol + NADP(+) + n H(+)(out). In terms of biological role, NDH-1 shuttles electrons from an unknown electron donor, via FMN and iron-sulfur (Fe-S) centers, to quinones in the respiratory and/or the photosynthetic chain. The immediate electron acceptor for the enzyme in this species is believed to be plastoquinone. Couples the redox reaction to proton translocation, and thus conserves the redox energy in a proton gradient. Cyanobacterial NDH-1 also plays a role in inorganic carbon-concentration. The chain is NAD(P)H-quinone oxidoreductase subunit N from Synechococcus sp. (strain CC9902).